Consider the following 305-residue polypeptide: Transcription factor bHLH18 (305 aa).

The interval 41–67 (LKTTHISPNLHPFSSSNPPPPKHQPSS) is disordered. Over residues 44–56 (THISPNLHPFSSS) the composition is skewed to polar residues. In terms of domain architecture, bHLH spans 122 to 171 (SNAQDHILAERKRREKLTQRFVALSALIPGLKKMDKASVLGDAIKHIKYL). The segment at 201 to 224 (DENHQPSSSSSSDGNRNSSSSNLP) is disordered. Residues 207–222 (SSSSSSDGNRNSSSSN) are compositionally biased toward low complexity.

In terms of assembly, homodimer. As to expression, expressed in roots.

It is found in the nucleus. The protein is Transcription factor bHLH18 (BHLH18) of Arabidopsis thaliana (Mouse-ear cress).